The primary structure comprises 296 residues: Cytidine deaminase (296 aa).

CMP/dCMP-type deaminase domains are found at residues 52–172 and 191–296; these read TAVE…FGPK and THAD…YFAL. Residue 93 to 95 participates in substrate binding; it reads NQE. Residue His106 participates in Zn(2+) binding. Catalysis depends on Glu108, which acts as the Proton donor. The Zn(2+) site is built by Cys133 and Cys136.

The protein belongs to the cytidine and deoxycytidylate deaminase family. In terms of assembly, homodimer. It depends on Zn(2+) as a cofactor.

The catalysed reaction is cytidine + H2O + H(+) = uridine + NH4(+). It catalyses the reaction 2'-deoxycytidine + H2O + H(+) = 2'-deoxyuridine + NH4(+). Its function is as follows. This enzyme scavenges exogenous and endogenous cytidine and 2'-deoxycytidine for UMP synthesis. In Actinobacillus succinogenes (strain ATCC 55618 / DSM 22257 / CCUG 43843 / 130Z), this protein is Cytidine deaminase.